We begin with the raw amino-acid sequence, 325 residues long: Urease accessory protein UreD (325 aa).

The protein belongs to the UreD family. In terms of assembly, ureD, UreF and UreG form a complex that acts as a GTP-hydrolysis-dependent molecular chaperone, activating the urease apoprotein by helping to assemble the nickel containing metallocenter of UreC. The UreE protein probably delivers the nickel.

Its subcellular location is the cytoplasm. Functionally, required for maturation of urease via the functional incorporation of the urease nickel metallocenter. Its function is as follows. Expression of the urease operon increases the likelihood of bacterial survival by contributing to acid resistance in vitro and in vivo in BALB/c mice. Y.enterocolitica enters the body via an oral path and must survive the acidic stomach before being able to colonize the intestinal mucosa. This Yersinia enterocolitica protein is Urease accessory protein UreD.